Here is a 1082-residue protein sequence, read N- to C-terminus: Mediator of RNA polymerase II transcription subunit 14 (1082 aa).

Disordered stretches follow at residues 1-80 (MTTT…APPP) and 319-343 (EATSTNGDSENNEENSSSNGNNLPL). Thr-2 carries the N-acetylthreonine modification. Residue Ser-7 is modified to Phosphoserine. Residues 13 to 28 (NEERLSNEMHALKNRS) are compositionally biased toward basic and acidic residues. Residues 29–59 (EQNGQEQQGPVKNTQLHGPSATDPETTATQK) show a composition bias toward polar residues. The segment covering 321–340 (TSTNGDSENNEENSSSNGNN) has biased composition (low complexity). Thr-1036 carries the phosphothreonine modification.

It belongs to the Mediator complex subunit 14 family. As to quaternary structure, component of the Mediator complex, which is composed of at least 21 subunits that form three structurally distinct submodules. The Mediator head module contains MED6, MED8, MED11, SRB4/MED17, SRB5/MED18, ROX3/MED19, SRB2/MED20 and SRB6/MED22, the middle module contains MED1, MED4, NUT1/MED5, MED7, CSE2/MED9, NUT2/MED10, SRB7/MED21 and SOH1/MED31, and the tail module contains MED2, PGD1/MED3, RGR1/MED14, GAL11/MED15 and SIN4/MED16. The head and the middle modules interact directly with RNA polymerase II, whereas the elongated tail module interacts with gene-specific regulatory proteins.

The protein resides in the nucleus. Component of the Mediator complex, a coactivator involved in the regulated transcription of nearly all RNA polymerase II-dependent genes. Mediator functions as a bridge to convey information from gene-specific regulatory proteins to the basal RNA polymerase II transcription machinery. The Mediator complex, having a compact conformation in its free form, is recruited to promoters by direct interactions with regulatory proteins and serves for the assembly of a functional preinitiation complex with RNA polymerase II and the general transcription factors. The Mediator complex unfolds to an extended conformation and partially surrounds RNA polymerase II, specifically interacting with the unphosphorylated form of the C-terminal domain (CTD) of RNA polymerase II. The Mediator complex dissociates from the RNA polymerase II holoenzyme and stays at the promoter when transcriptional elongation begins. The sequence is that of Mediator of RNA polymerase II transcription subunit 14 (RGR1) from Saccharomyces cerevisiae (strain ATCC 204508 / S288c) (Baker's yeast).